The following is a 664-amino-acid chain: E3 ubiquitin-protein ligase CHFR (664 aa).

The FHA domain maps to 38–89 (WTIGRRRGCDLSFPSNKLVSGDHCKLTVDEISGEVTLEDTSTNGTVINKLQV). Disordered stretches follow at residues 170 to 220 (LEEP…GRSS) and 245 to 264 (ESKD…GDGE). Over residues 174-202 (QPSTSTSDLLPTASTSSTEPELTSAGQKH) the composition is skewed to polar residues. A compositionally biased stretch (low complexity) spans 203-215 (SSSSGPGNTSISP). A compositionally biased stretch (basic and acidic residues) spans 245 to 263 (ESKDHEELEPAKKKMKGDG). Residues 303–342 (CIICQDLLHDCVSLQPCMHTFCAACYSGWMERSSLCPTCR) form an RING-type zinc finger. A Phosphothreonine modification is found at T385. The interval 389 to 413 (LQPKVRRSFSDEEGSSEDLLELSDV) is disordered. The segment covering 399 to 413 (DEEGSSEDLLELSDV) has biased composition (acidic residues). Residues 633-655 (PDCYWGRNCRTQVKAHHAMKFNH) form a PBZ-type zinc finger.

Belongs to the CHFR family. As to quaternary structure, interacts with HDAC1 and HDAC2. Interacts with PML (with sumoylated form of PML). In terms of processing, poly-ADP-ribosylated. In addition to binding non covalently poly(ADP-ribose) via its PBZ-type zinc finger, the protein is also covalently poly-ADP-ribosylated by PARP1. Post-translationally, autoubiquitinated; may regulate its cellular level. Phosphorylated by PKB. Phosphorylation may affect its E3 ligase activity.

The protein resides in the nucleus. It is found in the PML body. The catalysed reaction is S-ubiquitinyl-[E2 ubiquitin-conjugating enzyme]-L-cysteine + [acceptor protein]-L-lysine = [E2 ubiquitin-conjugating enzyme]-L-cysteine + N(6)-ubiquitinyl-[acceptor protein]-L-lysine.. Its pathway is protein modification; protein ubiquitination. Functionally, E3 ubiquitin-protein ligase that functions in the antephase checkpoint by actively delaying passage into mitosis in response to microtubule poisons. Acts in early prophase before chromosome condensation, when the centrosome move apart from each other along the periphery of the nucleus. Probably involved in signaling the presence of mitotic stress caused by microtubule poisons by mediating the 'Lys-48'-linked ubiquitination of target proteins, leading to their degradation by the proteasome. Promotes the ubiquitination and subsequent degradation of AURKA and PLK1. Probably acts as a tumor suppressor, possibly by mediating the polyubiquitination of HDAC1, leading to its degradation. May also promote the formation of 'Lys-63'-linked polyubiquitin chains and functions with the specific ubiquitin-conjugating UBC13-MMS2 (UBE2N-UBE2V2) heterodimer. Substrates that are polyubiquitinated at 'Lys-63' are usually not targeted for degradation, but are rather involved in signaling cellular stress. The protein is E3 ubiquitin-protein ligase CHFR (Chfr) of Mus musculus (Mouse).